A 180-amino-acid polypeptide reads, in one-letter code: Ribosome-recycling factor (180 aa).

The interval 135-156 (SDLKKDNDLSEDSRHRTEDDIQ) is disordered.

This sequence belongs to the RRF family.

It localises to the cytoplasm. In terms of biological role, responsible for the release of ribosomes from messenger RNA at the termination of protein biosynthesis. May increase the efficiency of translation by recycling ribosomes from one round of translation to another. The sequence is that of Ribosome-recycling factor from Oenococcus oeni (strain ATCC BAA-331 / PSU-1).